Reading from the N-terminus, the 105-residue chain is Heme oxygenase (mycobilin-producing) (105 aa).

Residues 3 to 92 (VVKINAIEVP…VATGASLLEF (90 aa)) form the ABM domain. Residues 22–26 (RFAHR), H75, and 83–86 (VATG) contribute to the heme site.

This sequence belongs to the antibiotic biosynthesis monooxygenase family. In terms of assembly, homodimer.

It catalyses the reaction heme b + 3 AH2 + 3 O2 + 2 H(+) = mycobilin a + Fe(2+) + 3 A + 3 H2O. It carries out the reaction heme b + 3 AH2 + 3 O2 + 2 H(+) = mycobilin b + Fe(2+) + 3 A + 3 H2O. Its function is as follows. Catalyzes the oxidative degradation of the heme macrocyclic porphyrin ring in the presence of a suitable electron donor such as ascorbate or NADPH--cytochrome P450 reductase, with subsequent release of free iron. The sequence is that of Heme oxygenase (mycobilin-producing) (mhuD) from Mycobacterium tuberculosis (strain CDC 1551 / Oshkosh).